We begin with the raw amino-acid sequence, 95 residues long: uncharacterized protein (95 aa).

The first 17 residues, 1–17 (MTSSLVIYIFLWSRLIC), serve as a signal peptide directing secretion.

This is an uncharacterized protein from Saccharomyces cerevisiae (strain ATCC 204508 / S288c) (Baker's yeast).